Consider the following 172-residue polypeptide: uncharacterized protein (172 aa).

This is an uncharacterized protein from Treponema pallidum (strain Nichols).